Consider the following 169-residue polypeptide: Vimentin-type intermediate filament-associated coiled-coil protein (169 aa).

A coiled-coil region spans residues 7-89 (LQIREANAHL…VHSLQATVHQ (83 aa)). Low complexity predominate over residues 126–135 (RLGPLPASDP). Residues 126 to 169 (RLGPLPASDPGHPPPGGPGPPLDNSTGEEADRDHLQPAVFGTTV) form a disordered region. Pro residues predominate over residues 136 to 146 (GHPPPGGPGPP).

The protein resides in the cytoplasm. This chain is Vimentin-type intermediate filament-associated coiled-coil protein (VMAC), found in Homo sapiens (Human).